The primary structure comprises 152 residues: Ribonuclease H (152 aa).

The RNase H type-1 domain occupies 4–145 (SRSMVEIFSD…CDELARQAIA (142 aa)). Mg(2+)-binding residues include Asp-13, Glu-51, Asp-73, and Asp-137.

It belongs to the RNase H family. Monomer. Mg(2+) serves as cofactor.

The protein localises to the cytoplasm. The enzyme catalyses Endonucleolytic cleavage to 5'-phosphomonoester.. Its function is as follows. Endonuclease that specifically degrades the RNA of RNA-DNA hybrids. In Syntrophotalea carbinolica (strain DSM 2380 / NBRC 103641 / GraBd1) (Pelobacter carbinolicus), this protein is Ribonuclease H.